Reading from the N-terminus, the 440-residue chain is Xaa-Pro dipeptidase (440 aa).

Mn(2+) is bound by residues Asp-244, Asp-255, His-336, Glu-381, and Glu-420.

This sequence belongs to the peptidase M24B family. Mn(2+) serves as cofactor. Post-translationally, the N-terminus is blocked.

It carries out the reaction Xaa-L-Pro dipeptide + H2O = an L-alpha-amino acid + L-proline. The enzyme catalyses diisopropyl fluorophosphate + H2O = diisopropyl phosphate + fluoride + 2 H(+). Splits dipeptides with a prolyl or hydroxyprolyl residue in the C-terminal position and a nonpolar amino acid at the N-terminal position. Also catalyzes the hydrolysis of toxic organophosphorus cholinesterase-inhibiting compounds including nerve gases such as diisopropylfluorophosphate (DFP), O-isopropyl methylphosphonofluoridate (sarin), O-pinacolyl methylphosphonofluoridate (soman), and O-cyclohexyl methylphosphonofluoridate. This chain is Xaa-Pro dipeptidase (pepQ), found in Pseudoalteromonas haloplanktis (Alteromonas haloplanktis).